The sequence spans 23 residues: 48 kDa cell wall protein (23 aa).

Its subcellular location is the secreted. It is found in the cell wall. The polypeptide is 48 kDa cell wall protein (Nicotiana tabacum (Common tobacco)).